We begin with the raw amino-acid sequence, 167 residues long: Putative C-type lectin-like domain family 1 (167 aa).

At 1–67 (MVSNFFHVIQ…KYDCPFSGTS (67 aa)) the chain is on the cytoplasmic side. The helical; Signal-anchor for type II membrane protein transmembrane segment at 68 to 88 (FVVFSLFLICAMAGDVVYADI) threads the bilayer. Over 89–167 (KTVRTSPLEL…DITAMVRFNI (79 aa)) the chain is Extracellular. N-linked (GlcNAc...) asparagine glycosylation is found at N109, N140, and N149. Residues 116-167 (SCPAKDWKVHKGKCYWIAETKKSWNKSQNDCAINNSYLMVIQDITAMVRFNI) form the C-type lectin; atypical domain.

As to expression, expressed in spleen, lymph node, and tonsil. Lower expression in peripheral blood, bone marrow, and colon. No expression detected in thymus. Highly expressed in dendritic and B-cells.

Its subcellular location is the cell membrane. Functionally, may function in mediating immune cell-cell interactions. May act as a T-cell costimulatory molecule, enhancing anti-CD3-induced proliferation. May play a role in the interaction of dendritic cells with T-cells and the cells of the adaptive immune response. The protein is Putative C-type lectin-like domain family 1 of Homo sapiens (Human).